Consider the following 150-residue polypeptide: AN1-type zinc finger protein TMC1 (150 aa).

Positions 1–82 (MSDINEIEIP…TKKTTKKKKK (82 aa)) are disordered. S2 carries the N-acetylserine modification. A compositionally biased stretch (basic and acidic residues) spans 23–33 (DPMHEIEDKST). S43 and S54 each carry phosphoserine. Residues 53-70 (NSRSSSNSSVTSTGQSSR) are compositionally biased toward low complexity. A compositionally biased stretch (basic residues) spans 71-82 (RVTKKTTKKKKK). The AN1-type zinc finger occupies 79–128 (KKKKNACYFDTCSSAASKFIGDCNFCKGHFCSKHRLMENHACNGLTSCKE). The Zn(2+) site is built by C85, C90, C101, C104, C109, H112, H118, and C120.

Its subcellular location is the nucleus. May have a role in protecting cells from metalloid-induced proteotoxicity. This is AN1-type zinc finger protein TMC1 from Saccharomyces cerevisiae (strain ATCC 204508 / S288c) (Baker's yeast).